The primary structure comprises 102 residues: Small ribosomal subunit protein eS24 (102 aa).

Belongs to the eukaryotic ribosomal protein eS24 family.

The polypeptide is Small ribosomal subunit protein eS24 (Methanococcus maripaludis (strain DSM 14266 / JCM 13030 / NBRC 101832 / S2 / LL)).